The primary structure comprises 279 residues: MGILEQLENPKFKATKSEKTLIEYIKSDLDNIIYKSISIIAKESGVGEATITRFTKKLGFNGFQDFKVTLAKEISNKKNTSIINLHVHRDESVTETANKMLKSSINILEQTVKQIDLDLMCKCRDLIMNAKRVYFIGIGYSGIAATDINYKFMRIGFTTVPVTDSHTMVIMSSITNDDDVIVAISNSGTTKEVIKTVKQAKENGTKIITLTEDSDNPLRKLSDYELTYTSAETIFETGSISSKIPQIFLLDLLYTEVIKEMFSEAVEKKIKTTSAILND.

One can recognise an HTH rpiR-type domain in the interval 1–77; sequence MGILEQLENP…VTLAKEISNK (77 aa). Positions 37-56 form a DNA-binding region, H-T-H motif; the sequence is ISIIAKESGVGEATITRFTK. An SIS domain is found at 123-263; that stretch reads CRDLIMNAKR…YTEVIKEMFS (141 aa).

This is an uncharacterized protein from Clostridium perfringens (strain 13 / Type A).